A 525-amino-acid polypeptide reads, in one-letter code: MTENIHKHRILILDFGSQYTQLVARRVRELGVYCELWAWDVTEAQIRDFNPSGIILSGGPESTTEENSPRAPQYVFEAGVPVFGVCYGMQTMAMQLGGHVEASNEREFGYAQVEVVNDSALVRGIEDALTADGKPLLDVWMSHGDKVTAIPSDFVTVASTESCPFAIMANEEKRFYGVQFHPEVTHTRQGMRMLERFVRDICQCEALWTPAKIIDDAVARIREQVGDDKVILGLSGGVDSSVTAMLLHRAIGKNLTCVFVDNGLLRLSEAEQVLDMFGDHFGLNIVHVPAEDRFLSALAGENDPEAKRKIIGRVFVEVFDEEALKLEDVKWLAQGTIYPDVIESAASATGKAHVIKSHHNVGGLPKEMKMGLVEPLKELFKDEVRKIGLELGLPYDMLYRHPFPGPGLGVRVLGEVKKEYCDLLRRADAIFIEELRKADLYDKVSQAFTVFLPVRSVGVMGDGRKYDWVVSLRAVETIDFMTAHWAHLPYDFLGRVSNRIINEVNGISRVVYDISGKPPATIEWE.

Positions arginine 9–leucine 207 constitute a Glutamine amidotransferase type-1 domain. Cysteine 86 acts as the Nucleophile in catalysis. Active-site residues include histidine 181 and glutamate 183. A GMPS ATP-PPase domain is found at tryptophan 208–arginine 400. Position 235–241 (serine 235–serine 241) interacts with ATP.

As to quaternary structure, homodimer.

It carries out the reaction XMP + L-glutamine + ATP + H2O = GMP + L-glutamate + AMP + diphosphate + 2 H(+). The protein operates within purine metabolism; GMP biosynthesis; GMP from XMP (L-Gln route): step 1/1. Functionally, catalyzes the synthesis of GMP from XMP. This Escherichia coli O139:H28 (strain E24377A / ETEC) protein is GMP synthase [glutamine-hydrolyzing].